A 651-amino-acid polypeptide reads, in one-letter code: Transcription factor E2-alpha (651 aa).

3 disordered regions span residues 32-107 (ANGK…SERN), 131-208 (LSLS…KTPS), and 341-378 (DHSS…ALSP). Low complexity-rich tracts occupy residues 56–73 (SSGS…FDPS), 131–148 (LSLS…KSSS), and 341–354 (DHSS…PSTP). 2 positions are modified to phosphoserine: Ser135 and Ser140. Thr353 is subject to Phosphothreonine. Ser357 carries the post-translational modification Phosphoserine. Arg369 carries the post-translational modification Omega-N-methylarginine. Ser377 bears the Phosphoserine mark. The leucine-zipper stretch occupies residues 387 to 422 (LSKMEDRLDEAIHVLRSHAVGTASDLHGLLPGHGAL). The segment at 457 to 549 (HNHASLPSQP…KAEREKERRV (93 aa)) is disordered. The span at 461–479 (SLPSQPSSLPDLSQRPPDS) shows a compositional bias: low complexity. Lys496 is covalently cross-linked (Glycyl lysine isopeptide (Lys-Gly) (interchain with G-Cter in SUMO2)). Ser526 carries the phosphoserine modification. The residue at position 528 (Asp528) is a Phosphothreonine. Asp533 carries the post-translational modification Phosphoserine. Basic and acidic residues predominate over residues 539 to 549 (QKAEREKERRV). A bHLH domain is found at 546–599 (ERRVANNARERLRVRDINEAFKELGRMCQLHLSSEKPQTKLLILHQAVAVILSL). A Glycyl lysine isopeptide (Lys-Gly) (interchain with G-Cter in SUMO2) cross-link involves residue Lys622.

Homodimer. Heterodimer; efficient DNA binding requires dimerization with another bHLH protein. Forms a heterodimer with TWIST1 and TWIST2. Forms a heterodimer with NEUROD1; the heterodimer is inhibited in presence of ID2, but not NR0B2, to E-box element. Forms a heterodimer with TCF15; the heterodimer binds E-box element. Forms a heterodimer with MYOG; heterodimerization enhances MYOG DNA-binding and transcriptional activities. Forms a heterodimer with ATOH8; repress transcription of TCF3 and TCF3-NEUROG3 dimer-induced transactivation of E box-dependent promoters. Component of a nuclear TAL-1 complex composed at least of CBFA2T3, LDB1, TAL1 and TCF3. Interacts with NEUROD2. Interacts with EP300. Interacts with PTF1A, TGFB1I1 and UBE2I. Interacts with BHLHA9. Interacts with ASB2; the interaction is mediated by SKP2 and targets TCF3 for Notch-induced proteasomal degradation. Interacts with transcription factor ASCL5/AmeloD. As to quaternary structure, forms a heterodimer with ATOH7; required for ATOH7 DNA-binding. In terms of assembly, interacts with RALGAPA1. Interacts with FIGLA. In terms of processing, phosphorylated following NGF stimulation. Undergoes Notch-induced ubiquitination and subsequent proteasomal degradation which is mediated by ASB1 or ASB2, the substrate-recognition components of probable ECS E3 ubiquitin-protein ligase complexes.

It is found in the nucleus. Transcriptional regulator involved in the initiation of neuronal differentiation and mesenchymal to epithelial transition. Heterodimers between TCF3 and tissue-specific basic helix-loop-helix (bHLH) proteins play major roles in determining tissue-specific cell fate during embryogenesis, like muscle or early B-cell differentiation. Together with TCF15, required for the mesenchymal to epithelial transition. Dimers bind DNA on E-box motifs: 5'-CANNTG-3'. Binds to the kappa-E2 site in the kappa immunoglobulin gene enhancer. Binds to IEB1 and IEB2, which are short DNA sequences in the insulin gene transcription control region. Functionally, facilitates ATOH7 binding to DNA at the consensus sequence 5'-CAGGTG-3', and positively regulates transcriptional activity. The protein is Transcription factor E2-alpha (Tcf3) of Mus musculus (Mouse).